The sequence spans 142 residues: UPF0305 protein MK0666 (142 aa).

This sequence belongs to the UPF0305 family.

This Methanopyrus kandleri (strain AV19 / DSM 6324 / JCM 9639 / NBRC 100938) protein is UPF0305 protein MK0666.